A 445-amino-acid chain; its full sequence is Putative U-box domain-containing protein 47 (445 aa).

A U-box domain is found at 64–137 (EVPKEFICTL…KEWCLIHNFD (74 aa)).

It catalyses the reaction S-ubiquitinyl-[E2 ubiquitin-conjugating enzyme]-L-cysteine + [acceptor protein]-L-lysine = [E2 ubiquitin-conjugating enzyme]-L-cysteine + N(6)-ubiquitinyl-[acceptor protein]-L-lysine.. It functions in the pathway protein modification; protein ubiquitination. Its function is as follows. Functions as an E3 ubiquitin ligase. The sequence is that of Putative U-box domain-containing protein 47 (PUB47) from Arabidopsis thaliana (Mouse-ear cress).